Consider the following 132-residue polypeptide: MTMTDPIADMLTRLRNASAAKHETVDMPYSKFKANIAEILKREGYIKDFTAKEAKVGQTLEVTLKYGPNGERSIQGIKRISKPGLRRYAKSDSLPMPLGGLGIAIISTSSGLLTQKECLDRGIGGEIVAFVW.

This sequence belongs to the universal ribosomal protein uS8 family. Part of the 30S ribosomal subunit. Contacts proteins S5 and S12.

Its function is as follows. One of the primary rRNA binding proteins, it binds directly to 16S rRNA central domain where it helps coordinate assembly of the platform of the 30S subunit. The sequence is that of Small ribosomal subunit protein uS8 from Bifidobacterium longum (strain NCC 2705).